The sequence spans 504 residues: L-carnitine/gamma-butyrobetaine antiporter (504 aa).

The next 12 membrane-spanning stretches (helical) occupy residues 10 to 30 (IEPK…WLTV), 51 to 71 (WGWA…WLVF), 92 to 112 (IFMM…SIEI), 143 to 163 (GPLP…FFFV), 195 to 215 (FYLV…TPLV), 231 to 251 (LDAI…ACGL), 263 to 283 (SYLS…SFIM), 316 to 336 (WTVF…IFLA), 347 to 367 (LCFG…TVLG), 398 to 418 (WAAL…CFIA), 446 to 466 (LLVR…LLAL), and 475 to 495 (AIIA…LSFI).

The protein belongs to the BCCT transporter (TC 2.A.15) family. CaiT subfamily. Homotrimer.

The protein resides in the cell inner membrane. The enzyme catalyses 4-(trimethylamino)butanoate(in) + (R)-carnitine(out) = 4-(trimethylamino)butanoate(out) + (R)-carnitine(in). The protein operates within amine and polyamine metabolism; carnitine metabolism. Its function is as follows. Catalyzes the exchange of L-carnitine for gamma-butyrobetaine. The sequence is that of L-carnitine/gamma-butyrobetaine antiporter from Escherichia coli O157:H7.